The sequence spans 776 residues: Protein translocase subunit SecA 2 (776 aa).

ATP-binding positions include glutamine 80, 98–102, and aspartate 486; that span reads GEGKT.

The protein belongs to the SecA family. In terms of assembly, monomer and homodimer. Part of the essential Sec protein translocation apparatus which comprises SecA, SecYEG and auxiliary proteins SecDF. Other proteins may also be involved.

The protein resides in the cell membrane. It is found in the cytoplasm. The enzyme catalyses ATP + H2O + cellular proteinSide 1 = ADP + phosphate + cellular proteinSide 2.. Its function is as follows. Part of the Sec protein translocase complex. Interacts with the SecYEG preprotein conducting channel. Has a central role in coupling the hydrolysis of ATP to the transfer of proteins into and across the cell membrane, serving as an ATP-driven molecular motor driving the stepwise translocation of polypeptide chains across the membrane. This chain is Protein translocase subunit SecA 2, found in Listeria monocytogenes serotype 4b (strain F2365).